The sequence spans 604 residues: ATP-dependent RNA helicase DBP1 (604 aa).

The tract at residues 1 to 79 (MSDGSGRYVP…RASGSGGFGG (79 aa)) is disordered. The span at 32-45 (SRYSGNGFFSSPNR) shows a compositional bias: polar residues. The Q motif signature appears at 138 to 166 (TEFKSPPLDELLLENVELANFSKPTPVQK). One can recognise a Helicase ATP-binding domain in the interval 169–358 (IPIVTKNRDL…RDFLKDYIFL (190 aa)). 182-189 (AQTGSGKT) provides a ligand contact to ATP. Positions 302-305 (DEAD) match the DEAD box motif. Positions 386–529 (LLDILINEID…EVPQFLVNMV (144 aa)) constitute a Helicase C-terminal domain. A disordered region spans residues 535–591 (FGRGGRNSRTGSNRGRGSNTRDYRHSNKDDWGSLGSSRRGFRSNDNRGFGNNWGSSS). The span at 541-552 (NSRTGSNRGRGS) shows a compositional bias: low complexity. Over residues 553–565 (NTRDYRHSNKDDW) the composition is skewed to basic and acidic residues.

Belongs to the DEAD box helicase family. DDX3/DED1 subfamily.

The protein localises to the cytoplasm. It carries out the reaction ATP + H2O = ADP + phosphate + H(+). Its function is as follows. ATP-binding RNA helicase involved in translation initiation. Remodels RNA in response to ADP and ATP concentrations by facilitating disruption, but also formation of RNA duplexes. Redundant to DED1, may be required in conditions in which DED1 expression is decreased. The sequence is that of ATP-dependent RNA helicase DBP1 (DBP1) from Candida glabrata (strain ATCC 2001 / BCRC 20586 / JCM 3761 / NBRC 0622 / NRRL Y-65 / CBS 138) (Yeast).